The chain runs to 89 residues: Probable Fe(2+)-trafficking protein (89 aa).

Belongs to the Fe(2+)-trafficking protein family.

Could be a mediator in iron transactions between iron acquisition and iron-requiring processes, such as synthesis and/or repair of Fe-S clusters in biosynthetic enzymes. The protein is Probable Fe(2+)-trafficking protein of Legionella pneumophila (strain Paris).